We begin with the raw amino-acid sequence, 314 residues long: MGSQALPPGPMQTLIFFDMEATGLPFSQPKVTELCLLAVHRCALESPPTSQGPPPTVPPPPRVVDKLSLCVAPGKACSPAASEITGLSTAVLAAHGRQCFDDNLANLLLAFLRRQPQPWCLVAHNGDRYDFPLLQAELAMLGLTSALDGAFCVDSITALKALERASSPSEHGPRKSYSLGSIYTRLYGQSPPDSHTAEGDVLALLSICQWRPQALLRWVDAHARPFGTIRPMYGVTASARTKPRPSAVTTTAHLATTRNTSPSLGESRGTKDLPPVKDPGALSREGLLAPLGLLAILTLAVATLYGLSLATPGE.

Mg(2+) contacts are provided by D18 and E20. Substrate is bound at residue 20-21 (EA). Residue S78 is modified to Phosphoserine. Y129 lines the substrate pocket. S167 carries the post-translational modification Phosphoserine. H195 functions as the Proton donor/acceptor in the catalytic mechanism. Mg(2+) is bound at residue D200. D200 contacts substrate. Residues 236–314 (TASARTKPRP…YGLSLATPGE (79 aa)) form a necessary for endoplasmic reticulum localization region. Residues 240-278 (RTKPRPSAVTTTAHLATTRNTSPSLGESRGTKDLPPVKD) form a disordered region. Residues 243–314 (PRPSAVTTTA…YGLSLATPGE (72 aa)) form an interaction with UBQLN1 region. The span at 247–260 (AVTTTAHLATTRNT) shows a compositional bias: low complexity. S261 bears the Phosphoserine mark. Residues 281–314 (ALSREGLLAPLGLLAILTLAVATLYGLSLATPGE) are necessary for cytoplasmic retention.

The protein belongs to the exonuclease superfamily. TREX family. Homodimer. Interacts (via proline-rich region) with TCERG1/CA150 (via the second WW domain). Component of the SET complex, composed of at least ANP32A, APEX1, HMGB2, NME1, SET and TREX1. Within this complex, directly interacts with SET; this interaction does not result in TREX1 inhibition. Also interacts with NME1, but only following translocation to the nucleus. Directly interacts with UBQLN1 (via ubiquitin-like domain); the interaction may control TREX1 subcellular location. It depends on Mg(2+) as a cofactor. In terms of processing, ubiquitinated, but not targeted to proteasomal degradation. Ubiquitination may be important for interaction with UBQLN1. Detected in thymus, spleen, liver, brain, heart, small intestine and colon.

It localises to the nucleus. The protein localises to the cytoplasm. Its subcellular location is the cytosol. The protein resides in the endoplasmic reticulum membrane. The catalysed reaction is Exonucleolytic cleavage in the 3'- to 5'-direction to yield nucleoside 5'-phosphates.. Major cellular 3'-to-5' DNA exonuclease which digests single-stranded DNA (ssDNA) and double-stranded DNA (dsDNA) with mismatched 3' termini. Prevents cell-intrinsic initiation of autoimmunity. Acts by metabolizing DNA fragments from endogenous retroelements, including L1, LTR and SINE elements. Plays a key role in degradation of DNA fragments at cytosolic micronuclei arising from genome instability: its association with the endoplasmic reticulum membrane directs TREX1 to ruptured micronuclei, leading to micronuclear DNA degradation. Micronuclear DNA degradation is required to limit CGAS activation and subsequent inflammation. Unless degraded, these DNA fragments accumulate in the cytosol and activate the cGAS-STING innate immune signaling, leading to the production of type I interferon. Prevents chronic ATM-dependent checkpoint activation, by processing ssDNA polynucleotide species arising from the processing of aberrant DNA replication intermediates. Inefficiently degrades oxidized DNA, such as that generated upon antimicrobial reactive oxygen production or upon absorption of UV light. During GZMA-mediated cell death, contributes to DNA damage in concert with NME1. NME1 nicks one strand of DNA and TREX1 removes bases from the free 3' end to enhance DNA damage and prevent DNA end reannealing and rapid repair. This chain is Three-prime repair exonuclease 1, found in Homo sapiens (Human).